The sequence spans 186 residues: Elongation factor P (186 aa).

The protein belongs to the elongation factor P family.

The protein resides in the cytoplasm. Its pathway is protein biosynthesis; polypeptide chain elongation. In terms of biological role, involved in peptide bond synthesis. Stimulates efficient translation and peptide-bond synthesis on native or reconstituted 70S ribosomes in vitro. Probably functions indirectly by altering the affinity of the ribosome for aminoacyl-tRNA, thus increasing their reactivity as acceptors for peptidyl transferase. The polypeptide is Elongation factor P (Elusimicrobium minutum (strain Pei191)).